The chain runs to 93 residues: Putative defensin-like protein 190 (93 aa).

Residues Met-1–Gly-30 form the signal peptide. Intrachain disulfides connect Cys-39–Cys-89, Cys-55–Cys-75, Cys-60–Cys-84, and Cys-64–Cys-86.

Belongs to the DEFL family.

The protein localises to the secreted. In Arabidopsis thaliana (Mouse-ear cress), this protein is Putative defensin-like protein 190.